A 151-amino-acid polypeptide reads, in one-letter code: Cytochrome c-type biogenesis protein CcmE (151 aa).

The Cytoplasmic portion of the chain corresponds to 1 to 8 (MNPQRKKR). The helical; Signal-anchor for type II membrane protein transmembrane segment at 9–29 (LLLIVGLLVGVGVAVGFALSA) threads the bilayer. The Periplasmic portion of the chain corresponds to 30-151 (LQQNINLFYT…QAAAGGETKP (122 aa)). Residues His-124 and Tyr-128 each contribute to the heme site.

The protein belongs to the CcmE/CycJ family.

It localises to the cell inner membrane. Functionally, heme chaperone required for the biogenesis of c-type cytochromes. Transiently binds heme delivered by CcmC and transfers the heme to apo-cytochromes in a process facilitated by CcmF and CcmH. This is Cytochrome c-type biogenesis protein CcmE from Pseudomonas putida (strain ATCC 700007 / DSM 6899 / JCM 31910 / BCRC 17059 / LMG 24140 / F1).